Consider the following 156-residue polypeptide: 6,7-dimethyl-8-ribityllumazine synthase (156 aa).

5-amino-6-(D-ribitylamino)uracil contacts are provided by residues F24, 56–58, and 80–82; these read SFE and AVV. 85 to 86 contacts (2S)-2-hydroxy-3-oxobutyl phosphate; the sequence is ET. H88 serves as the catalytic Proton donor. F113 lines the 5-amino-6-(D-ribitylamino)uracil pocket. R127 contributes to the (2S)-2-hydroxy-3-oxobutyl phosphate binding site.

The protein belongs to the DMRL synthase family.

It catalyses the reaction (2S)-2-hydroxy-3-oxobutyl phosphate + 5-amino-6-(D-ribitylamino)uracil = 6,7-dimethyl-8-(1-D-ribityl)lumazine + phosphate + 2 H2O + H(+). Its pathway is cofactor biosynthesis; riboflavin biosynthesis; riboflavin from 2-hydroxy-3-oxobutyl phosphate and 5-amino-6-(D-ribitylamino)uracil: step 1/2. Its function is as follows. Catalyzes the formation of 6,7-dimethyl-8-ribityllumazine by condensation of 5-amino-6-(D-ribitylamino)uracil with 3,4-dihydroxy-2-butanone 4-phosphate. This is the penultimate step in the biosynthesis of riboflavin. This Thermococcus kodakarensis (strain ATCC BAA-918 / JCM 12380 / KOD1) (Pyrococcus kodakaraensis (strain KOD1)) protein is 6,7-dimethyl-8-ribityllumazine synthase.